The following is a 76-amino-acid chain: MQLVLAAKYIGAGISTIGLLGAGIGIAIVFAALINGVSRNPSLRETLFPMAILGFALSEATGLFCLMISFLLIYAV.

A run of 2 helical transmembrane segments spans residues isoleucine 14–isoleucine 34 and isoleucine 52–leucine 72.

This sequence belongs to the ATPase C chain family. In terms of assembly, F-type ATPases have 2 components, CF(1) - the catalytic core - and CF(0) - the membrane proton channel. CF(1) has five subunits: alpha(3), beta(3), gamma(1), delta(1), epsilon(1). CF(0) has three main subunits: a, b and c.

Its subcellular location is the mitochondrion membrane. Functionally, mitochondrial membrane ATP synthase (F(1)F(0) ATP synthase or Complex V) produces ATP from ADP in the presence of a proton gradient across the membrane which is generated by electron transport complexes of the respiratory chain. F-type ATPases consist of two structural domains, F(1) - containing the extramembraneous catalytic core and F(0) - containing the membrane proton channel, linked together by a central stalk and a peripheral stalk. During catalysis, ATP synthesis in the catalytic domain of F(1) is coupled via a rotary mechanism of the central stalk subunits to proton translocation. Part of the complex F(0) domain. A homomeric c-ring of probably 10 subunits is part of the complex rotary element. This chain is ATP synthase subunit 9, mitochondrial (ATP9), found in Vanderwaltozyma polyspora (strain ATCC 22028 / DSM 70294 / BCRC 21397 / CBS 2163 / NBRC 10782 / NRRL Y-8283 / UCD 57-17) (Kluyveromyces polysporus).